Reading from the N-terminus, the 82-residue chain is Small ribosomal subunit protein uS17 (82 aa).

Belongs to the universal ribosomal protein uS17 family. Part of the 30S ribosomal subunit.

Its function is as follows. One of the primary rRNA binding proteins, it binds specifically to the 5'-end of 16S ribosomal RNA. This Pelobacter propionicus (strain DSM 2379 / NBRC 103807 / OttBd1) protein is Small ribosomal subunit protein uS17.